Here is a 354-residue protein sequence, read N- to C-terminus: UDP-glucose 4-epimerase 1 (354 aa).

8-39 (TILVTGGAGYIGSHTVLQLLQLGFRVVVLDNL) contributes to the NAD(+) binding site. Serine 133 contributes to the substrate binding site. The Proton acceptor role is filled by tyrosine 157.

It belongs to the NAD(P)-dependent epimerase/dehydratase family. Requires NAD(+) as cofactor.

It catalyses the reaction UDP-alpha-D-glucose = UDP-alpha-D-galactose. It functions in the pathway carbohydrate metabolism; galactose metabolism. Functionally, catalyzes the interconversion between UDP-glucose and UDP-galactose. In Oryza sativa subsp. japonica (Rice), this protein is UDP-glucose 4-epimerase 1 (UGE-1).